The sequence spans 191 residues: Calcium-activated potassium channel subunit beta-1 (191 aa).

Topologically, residues 1–18 are cytoplasmic; that stretch reads MGKKLVMAQKRGETRALC. A helical membrane pass occupies residues 19-39; the sequence is LGVAMVVCAAITYYILGTTVL. Over 40-155 the chain is Extracellular; sequence PLYQKSVWTQ…VVYQRLYGPQ (116 aa). Asn-80 and Asn-142 each carry an N-linked (GlcNAc...) asparagine glycan. The helical transmembrane segment at 156 to 176 threads the bilayer; sequence ILLFSFFWPTFLLTGGLLIIA. Residues 177 to 191 are Cytoplasmic-facing; the sequence is MVKLNRSLSVLAAQK.

This sequence belongs to the KCNMB (TC 8.A.14.1) family. KCNMB1 subfamily. Interacts with KCNMA1 tetramer. There are probably 4 molecules of KCMNB1 per KCNMA1 tetramer. N-glycosylated. Weakly expressed. In brain, it is expressed in a few discrete populations of neurons that also express KCNMA1.

It is found in the membrane. Functionally, regulatory subunit of the calcium activated potassium KCNMA1 (maxiK) channel. Modulates the calcium sensitivity and gating kinetics of KCNMA1, thereby contributing to KCNMA1 channel diversity. Increases the apparent Ca(2+)/voltage sensitivity of the KCNMA1 channel. It also modifies KCNMA1 channel kinetics and alters its pharmacological properties. It slows down the activation and the deactivation kinetics of the channel. Acts as a negative regulator of smooth muscle contraction by enhancing the calcium sensitivity to KCNMA1. Its presence is also a requirement for internal binding of the KCNMA1 channel opener dehydrosoyasaponin I (DHS-1) triterpene glycoside and for external binding of the agonist hormone 17-beta-estradiol (E2). Increases the binding activity of charybdotoxin (CTX) toxin to KCNMA1 peptide blocker by increasing the CTX association rate and decreasing the dissociation rate. The sequence is that of Calcium-activated potassium channel subunit beta-1 (Kcnmb1) from Rattus norvegicus (Rat).